Reading from the N-terminus, the 241-residue chain is MSKDTLFSAPIEKLGDFIFDESVAEVFPDMIQRSVPGYSNIITAIGMLASRFVTDQSNVYDLGCSRGAGILSIRRNVEKAGVRIIGVDNSEPMVERCRRHLEAYHSDIPVEILCDDIRHVEIKNASMVVLNFTLQFLPREDRLALLRKIYQGLNPNGVLVLSEKFTFEDNTINELLIDLHHTFKRANGYSELEVSQKRTALENVMRTDSIDTHKARLKEAGFSQVDLWFQCFNFGSMITIK.

S-adenosyl-L-methionine-binding positions include Y38, 63-65 (GCS), 88-89 (DN), 116-117 (DI), N131, and R198.

This sequence belongs to the class I-like SAM-binding methyltransferase superfamily. Cx-SAM synthase family. As to quaternary structure, homodimer.

The catalysed reaction is prephenate + S-adenosyl-L-methionine = carboxy-S-adenosyl-L-methionine + 3-phenylpyruvate + H2O. Its function is as follows. Catalyzes the conversion of S-adenosyl-L-methionine (SAM) to carboxy-S-adenosyl-L-methionine (Cx-SAM). This Glaesserella parasuis serovar 5 (strain SH0165) (Haemophilus parasuis) protein is Carboxy-S-adenosyl-L-methionine synthase.